The sequence spans 292 residues: Ribosomal protein L11 methyltransferase (292 aa).

S-adenosyl-L-methionine is bound by residues Thr-144, Gly-165, Asp-187, and Asn-229.

This sequence belongs to the methyltransferase superfamily. PrmA family.

It localises to the cytoplasm. It carries out the reaction L-lysyl-[protein] + 3 S-adenosyl-L-methionine = N(6),N(6),N(6)-trimethyl-L-lysyl-[protein] + 3 S-adenosyl-L-homocysteine + 3 H(+). In terms of biological role, methylates ribosomal protein L11. This Saccharophagus degradans (strain 2-40 / ATCC 43961 / DSM 17024) protein is Ribosomal protein L11 methyltransferase.